Consider the following 236-residue polypeptide: UPF0257 lipoprotein YnfC (236 aa).

The N-terminal stretch at 1 to 16 (MKKPLLLTLLCMILAG) is a signal peptide. Residue cysteine 17 is the site of N-palmitoyl cysteine attachment. Residue cysteine 17 is the site of S-diacylglycerol cysteine attachment.

Belongs to the UPF0257 family.

Its subcellular location is the cell membrane. The protein is UPF0257 lipoprotein YnfC of Salmonella dublin (strain CT_02021853).